We begin with the raw amino-acid sequence, 347 residues long: RNA 3'-terminal phosphate cyclase (347 aa).

ATP-binding positions include Gln-101 and 286 to 289 (HMAD). His-312 acts as the Tele-AMP-histidine intermediate in catalysis.

This sequence belongs to the RNA 3'-terminal cyclase family. Type 1 subfamily.

The protein localises to the cytoplasm. It catalyses the reaction a 3'-end 3'-phospho-ribonucleotide-RNA + ATP = a 3'-end 2',3'-cyclophospho-ribonucleotide-RNA + AMP + diphosphate. Functionally, catalyzes the conversion of 3'-phosphate to a 2',3'-cyclic phosphodiester at the end of RNA. The mechanism of action of the enzyme occurs in 3 steps: (A) adenylation of the enzyme by ATP; (B) transfer of adenylate to an RNA-N3'P to produce RNA-N3'PP5'A; (C) and attack of the adjacent 2'-hydroxyl on the 3'-phosphorus in the diester linkage to produce the cyclic end product. The biological role of this enzyme is unknown but it is likely to function in some aspects of cellular RNA processing. The protein is RNA 3'-terminal phosphate cyclase of Pyrobaculum neutrophilum (strain DSM 2338 / JCM 9278 / NBRC 100436 / V24Sta) (Thermoproteus neutrophilus).